The following is a 454-amino-acid chain: MSEPEFQQAYDEVVSSLEDSTLFEQHPKYRKVLPIVSVPERIIQFRVTWENDKGEQEVAQGYRVQYNSAKGPYKGGLRFHPSVNLSILKFLGFEQIFKNSLTGLDMGGGKGGLCVDLKGRSNNEIRRICYAFMRELSRHIGQDTDVPAGDIGVGGREIGYLFGAYRTYKNSWEGVLTGKGLNWGGSLIRPEATGYGLVYYTQAMIDYATNGKESFEGKRVTISGSGNVAQFAALKVIELGGTVVSLSDSKGCIISETGITSEQVADISSAKVNFKSLEQIVGEYSTFTENKVQYISGARPWTHVQKVDIALPCATQNEVSGDEAKALVAQGVKFVAEGSNMGSTPEAIAVFETARATASTLKESVWYGPPKAANLGGVAVSGLEMAQNSQRITWSSERVDQELKKIMVNCFNECIDSAKKYTKEGNALPSLVKGANIASFIKVSDAMFDQGDVF.

Lys110 is a catalytic residue. Residue 174 to 203 participates in NAD(+) binding; the sequence is GVLTGKGLNWGGSLIRPEATGYGLVYYTQA.

Belongs to the Glu/Leu/Phe/Val dehydrogenases family. Homohexamer.

It carries out the reaction L-glutamate + NADP(+) + H2O = 2-oxoglutarate + NH4(+) + NADPH + H(+). The sequence is that of NADP-specific glutamate dehydrogenase 1 (GDH1) from Saccharomyces uvarum (strain ATCC 76518 / CBS 7001 / CLIB 283 / NBRC 10550 / MCYC 623 / NCYC 2669 / NRRL Y-11845) (Yeast).